The primary structure comprises 33 residues: Cysteine-rich venom protein tripurin (33 aa).

This sequence belongs to the CRISP family. In terms of processing, contains 8 disulfide bonds. Expressed by the venom gland.

It localises to the secreted. Its function is as follows. Blocks contraction of smooth muscle elicited by high potassium-induced depolarization, but does not block caffeine-stimulated contraction. May target voltage-gated calcium channels on smooth muscle. The protein is Cysteine-rich venom protein tripurin of Trimeresurus purpureomaculatus (Mangrove pit viper).